Consider the following 133-residue polypeptide: Salivary cystatin-L2 (133 aa).

A signal peptide spans 1–18 (MTSSLALVLLLGGAAVCA). Residues 34–118 (DDPKYLELAH…RTCTAVIYEN (85 aa)) enclose the Cystatin domain.

It belongs to the cystatin family. Salivary gland, midgut and other tissues.

The protein localises to the secreted. In terms of biological role, inhibitor of cysteine proteinases. Inhibits host cathepsin L (CTSL) and S (CTSS). Modulates production of various cytokines and chemokines in lipopolysaccharide (LPS)-stimulated mouse dendritic cell. Suppresses maturation of mouse bone-marrow-derived dendritic cells (BMDCs). Its function is as follows. (Microbial infection) Modulates Borrelia miyamotoi-stimulated immune responses in mice by suppressing activities of host dendritic and T-cells. The polypeptide is Salivary cystatin-L2 (Ixodes persulcatus (Taiga tick)).